The following is a 181-amino-acid chain: Photosystem I assembly protein Ycf4 (181 aa).

2 consecutive transmembrane segments (helical) span residues 19 to 39 (YFWA…GISS) and 62 to 82 (VMMF…LTII).

It belongs to the Ycf4 family.

Its subcellular location is the plastid. It is found in the chloroplast thylakoid membrane. In terms of biological role, seems to be required for the assembly of the photosystem I complex. This chain is Photosystem I assembly protein Ycf4, found in Phaeodactylum tricornutum (strain CCAP 1055/1).